We begin with the raw amino-acid sequence, 318 residues long: Homoserine kinase (318 aa).

An ATP-binding site is contributed by 97–107 (PIGSGLGSSAC).

It belongs to the GHMP kinase family. Homoserine kinase subfamily.

The protein resides in the cytoplasm. It catalyses the reaction L-homoserine + ATP = O-phospho-L-homoserine + ADP + H(+). The protein operates within amino-acid biosynthesis; L-threonine biosynthesis; L-threonine from L-aspartate: step 4/5. Catalyzes the ATP-dependent phosphorylation of L-homoserine to L-homoserine phosphate. The sequence is that of Homoserine kinase from Aliivibrio fischeri (strain ATCC 700601 / ES114) (Vibrio fischeri).